A 404-amino-acid polypeptide reads, in one-letter code: Multidrug resistance protein MdtG (404 aa).

A run of 11 helical transmembrane segments spans residues 19-39, 56-76, 90-110, 113-133, 144-164, 171-191, 222-242, 254-274, 288-308, 317-337, and 376-396; these read LGCF…PLYV, LVFS…GGLA, LGMA…QFLI, ALLG…ATQV, TLST…GLLA, PVFF…FFFI, LFVT…ILTL, IAFI…LSAP, ILIV…FVQT, FLLG…LVYN, and AVFC…WNSL.

It belongs to the major facilitator superfamily. DHA1 family. MdtG (TC 2.A.1.2.20) subfamily.

It localises to the cell inner membrane. The polypeptide is Multidrug resistance protein MdtG (Salmonella agona (strain SL483)).